The chain runs to 502 residues: MMEINSEATVTLVSVVTLPILLALLTRKSSSKKRRPPGPWNLPLVGGLLHLLRSQPQVALRDLAGKYGPVMFLRTGQVDTVVISSPAAAQEVLRDKDVTFASRPSLLVSEIFCYGNLDIGFAPYGAYWRMLRKLCTVELLSTKMVRQLAPIRDGETLALVRNIEAAAGGKKPFTLATLLISCTNTFTAKAAFGQACGGELQEQFLTALDEALKFSNGFCFGDLFPSLRFIDAMTGLRSRLERLRLQLDTVFDKIVAQCESNPGDSLVNVLLRIKDQGELDFPFSSTHVKAIILDMFTGGTETTSSTTEWLMSELMRNPEVMAKVQAEVRGVFDNKSPQDHEGLLENLSYMKLVIKETLRLNPVLPLLLPHLCRETCEIGGYEIVEGTRVLINSWAMARSPEYWDDAEKFIPERFEDGTADFKGSRFEYLPFGTGRRRCPGDIFAMATLELIVARLLYYFDWSLPDGMQPGDIDMELVVGATARRKNHLQLVASPYKPISMQS.

The next 2 membrane-spanning stretches (helical) occupy residues 4–26 and 106–128; these read INSE…ALLT and LLVS…GAYW. Heme is bound at residue cysteine 438.

This sequence belongs to the cytochrome P450 family. It depends on heme as a cofactor.

The protein localises to the membrane. It catalyses the reaction 9beta-pimara-7,15-diene + 3 reduced [NADPH--hemoprotein reductase] + 3 O2 = 9beta-pimara-7,15-dien-19-oate + 3 oxidized [NADPH--hemoprotein reductase] + 4 H2O + 4 H(+). In terms of biological role, involved in momilactone phytoalexins biosynthesis; acts as a multifunctional diterpene oxidase. Participates in the biosynthetic steps between 9-beta-pimara-7,15-diene and 3-beta-hydroxy-9-beta-pimara-7,15-dien-19,6-beta-olide. Also catalyzes consecutive oxidations at C19 of syn-stemod-13(17)-ene. The chain is 9-beta-pimara-7,15-diene oxidase (CYP99A3) from Oryza sativa subsp. japonica (Rice).